The following is a 666-amino-acid chain: DNA mismatch repair protein MutL (666 aa).

It belongs to the DNA mismatch repair MutL/HexB family.

Its function is as follows. This protein is involved in the repair of mismatches in DNA. It is required for dam-dependent methyl-directed DNA mismatch repair. May act as a 'molecular matchmaker', a protein that promotes the formation of a stable complex between two or more DNA-binding proteins in an ATP-dependent manner without itself being part of a final effector complex. The polypeptide is DNA mismatch repair protein MutL (Clostridium botulinum (strain Okra / Type B1)).